Consider the following 1401-residue polypeptide: Lysine-specific demethylase 6A (1401 aa).

An interaction with SUPT6H region spans residues 1-1095 (MKSCGVSLAT…TNIDLSDDKK (1095 aa)). 8 TPR repeats span residues 93 to 126 (SDFF…QSDY), 130 to 163 (AAFL…DPSF), 170 to 199 (HLRL…DCNP), 205 to 238 (AEIQ…ENLS), 250 to 283 (GWMH…DPNS), 284 to 317 (GQSW…SEAS), 318 to 351 (ADTW…DHGH), and 352 to 385 (AAAW…KSCS). Polar residues predominate over residues 437–449 (AMNTAQQNTSDNW). Residues 437–457 (AMNTAQQNTSDNWSGGHAVSH) are disordered. R519 is subject to Omega-N-methylarginine. A disordered region spans residues 521–541 (TGIPNGPTADSSLPTNSVSGQ). Position 549 is an omega-N-methylarginine (R549). Polar residues-rich tracts occupy residues 624–652 (LTSS…SHSA) and 660–724 (LSST…SGNI). Disordered stretches follow at residues 624–746 (LTSS…SVEG), 758–778 (AVCS…SDNP), 810–864 (KTDN…ESQS), 914–940 (LLDK…NPPT), and 1043–1079 (FQES…KGPF). S769 bears the Phosphoserine mark. The segment covering 814 to 833 (SVASSPSSAISTATPSPKST) has biased composition (low complexity). At T827 the chain carries Phosphothreonine. S829 is subject to Phosphoserine. The segment covering 834–848 (EQTTTNSVTSLNSPH) has biased composition (polar residues). Residues 918–931 (CPPPRPPSSPYPPL) show a composition bias toward pro residues. Over residues 1046–1063 (SLREENEKRSHHKDHSDS) the composition is skewed to basic and acidic residues. The region spanning 1095-1258 (KWKLQLHELT…YKLAVERYEW (164 aa)) is the JmjC domain. Residues H1146, E1148, and H1226 each contribute to the Fe cation site. Residues C1331, C1334, C1358, and C1361 each coordinate Zn(2+).

Belongs to the UTX family. In terms of assembly, interacts with TLE1. Component of the MLL2/3 complex (also named ASCOM complex), at least composed of KMT2D/MLL2 or KMT2C/MLL3, ASH2L, RBBP5, WDR5, NCOA6, DPY30, KDM6A (or KDM6B), PAXIP1/PTIP, PAGR1 and alpha- and beta-tubulin. Interacts with SUPT6H. Interacts with SMARCA4. Interacts with PROSER1. It depends on L-ascorbate as a cofactor. Fe(2+) is required as a cofactor.

Its subcellular location is the nucleus. It carries out the reaction N(6),N(6),N(6)-trimethyl-L-lysyl(27)-[histone H3] + 2 2-oxoglutarate + 2 O2 = N(6)-methyl-L-lysyl(27)-[histone H3] + 2 formaldehyde + 2 succinate + 2 CO2. Its function is as follows. Histone demethylase that specifically demethylates 'Lys-27' of histone H3, thereby playing a central role in histone code. Demethylates trimethylated and dimethylated but not monomethylated H3 'Lys-27'. Plays a central role in regulation of posterior development, by regulating HOX gene expression. Demethylation of 'Lys-27' of histone H3 is concomitant with methylation of 'Lys-4' of histone H3, and regulates the recruitment of the PRC1 complex and monoubiquitination of histone H2A. Plays a demethylase-independent role in chromatin remodeling to regulate T-box family member-dependent gene expression. This is Lysine-specific demethylase 6A (KDM6A) from Homo sapiens (Human).